We begin with the raw amino-acid sequence, 273 residues long: 4-diphosphocytidyl-2-C-methyl-D-erythritol kinase (273 aa).

Residue K12 is part of the active site. Position 90-100 (90-100) interacts with ATP; sequence PVASGIGGGSA. D122 is a catalytic residue.

Belongs to the GHMP kinase family. IspE subfamily.

It catalyses the reaction 4-CDP-2-C-methyl-D-erythritol + ATP = 4-CDP-2-C-methyl-D-erythritol 2-phosphate + ADP + H(+). It participates in isoprenoid biosynthesis; isopentenyl diphosphate biosynthesis via DXP pathway; isopentenyl diphosphate from 1-deoxy-D-xylulose 5-phosphate: step 3/6. In terms of biological role, catalyzes the phosphorylation of the position 2 hydroxy group of 4-diphosphocytidyl-2C-methyl-D-erythritol. The polypeptide is 4-diphosphocytidyl-2-C-methyl-D-erythritol kinase (Paracoccus denitrificans (strain Pd 1222)).